The sequence spans 87 residues: Protein L (87 aa).

Functionally, this protein inhibits the multiplication of double-stranded DNA phages, such as P1 and lambda. The polypeptide is Protein L (L) (Escherichia coli).